The primary structure comprises 324 residues: 1-deoxyxylulose-5-phosphate synthase YajO (324 aa).

Tyrosine 61 functions as the Proton donor in the catalytic mechanism.

The protein belongs to the aldo/keto reductase family. Aldo/keto reductase 2 subfamily.

It carries out the reaction D-ribulose 5-phosphate + AH2 = 1-deoxy-D-xylulose 5-phosphate + A + H2O. Its activity is regulated as follows. NADH, NADPH or ATP do not increase activity. Catalyzes the conversion of ribulose 5-phosphate (Ru5P) to 1-deoxy-D-xylulose 5-phosphate (DXP), providing a direct route from pentoses to terpenes. May play a role in biosynthesis of DXP under conditions of thiamine starvation. The sequence is that of 1-deoxyxylulose-5-phosphate synthase YajO (yajO) from Escherichia coli (strain K12).